We begin with the raw amino-acid sequence, 165 residues long: 2-C-methyl-D-erythritol 2,4-cyclodiphosphate synthase (165 aa).

A divalent metal cation-binding residues include aspartate 13 and histidine 15. Residues 13–15 and 39–40 contribute to the 4-CDP-2-C-methyl-D-erythritol 2-phosphate site; these read DRH and HS. An a divalent metal cation-binding site is contributed by histidine 47. Residues 61–63 and phenylalanine 141 contribute to the 4-CDP-2-C-methyl-D-erythritol 2-phosphate site; that span reads DIG.

It belongs to the IspF family. In terms of assembly, homotrimer. A divalent metal cation is required as a cofactor.

It catalyses the reaction 4-CDP-2-C-methyl-D-erythritol 2-phosphate = 2-C-methyl-D-erythritol 2,4-cyclic diphosphate + CMP. It functions in the pathway isoprenoid biosynthesis; isopentenyl diphosphate biosynthesis via DXP pathway; isopentenyl diphosphate from 1-deoxy-D-xylulose 5-phosphate: step 4/6. Functionally, involved in the biosynthesis of isopentenyl diphosphate (IPP) and dimethylallyl diphosphate (DMAPP), two major building blocks of isoprenoid compounds. Catalyzes the conversion of 4-diphosphocytidyl-2-C-methyl-D-erythritol 2-phosphate (CDP-ME2P) to 2-C-methyl-D-erythritol 2,4-cyclodiphosphate (ME-CPP) with a corresponding release of cytidine 5-monophosphate (CMP). The sequence is that of 2-C-methyl-D-erythritol 2,4-cyclodiphosphate synthase from Thermotoga neapolitana (strain ATCC 49049 / DSM 4359 / NBRC 107923 / NS-E).